A 332-amino-acid polypeptide reads, in one-letter code: Biotin synthase (332 aa).

In terms of domain architecture, Radical SAM core spans 46-275; it reads YYGKKVKLNM…SKEIRISGGR (230 aa). [4Fe-4S] cluster is bound by residues Cys64, Cys68, and Cys71. Positions 108, 140, 200, and 270 each coordinate [2Fe-2S] cluster.

Belongs to the radical SAM superfamily. Biotin synthase family. As to quaternary structure, homodimer. Requires [4Fe-4S] cluster as cofactor. [2Fe-2S] cluster is required as a cofactor.

It carries out the reaction (4R,5S)-dethiobiotin + (sulfur carrier)-SH + 2 reduced [2Fe-2S]-[ferredoxin] + 2 S-adenosyl-L-methionine = (sulfur carrier)-H + biotin + 2 5'-deoxyadenosine + 2 L-methionine + 2 oxidized [2Fe-2S]-[ferredoxin]. It participates in cofactor biosynthesis; biotin biosynthesis; biotin from 7,8-diaminononanoate: step 2/2. Its function is as follows. Catalyzes the conversion of dethiobiotin (DTB) to biotin by the insertion of a sulfur atom into dethiobiotin via a radical-based mechanism. In Lysinibacillus sphaericus (Bacillus sphaericus), this protein is Biotin synthase.